Here is a 91-residue protein sequence, read N- to C-terminus: MKPNIHPDNYRTVLFFDSSANEGWLIRSCAGTHGKTMVWTDGKEYPLFSLDTSSSSHPVYTGKQRNVNTEGRASKFNQRFQSVMSSFRKDK.

Belongs to the bacterial ribosomal protein bL31 family. Type B subfamily. Part of the 50S ribosomal subunit.

The sequence is that of Large ribosomal subunit protein bL31B from Neisseria gonorrhoeae (strain NCCP11945).